The primary structure comprises 167 residues: Photosystem I assembly protein Ycf3 (167 aa).

TPR repeat units follow at residues 35-68 (AFTYYRDGMSAQAEGEYAEALQNYYEAMRLEIDP), 72-105 (SYILYNIGLIHTSNGEHAKALEYYFQALERNPSL), and 120-153 (GEQAIQQQDIESSKAWFNQAAEYWKQAIQLAPGN).

Belongs to the Ycf3 family.

The protein resides in the plastid. The protein localises to the chloroplast thylakoid membrane. Essential for the assembly of the photosystem I (PSI) complex. May act as a chaperone-like factor to guide the assembly of the PSI subunits. The chain is Photosystem I assembly protein Ycf3 from Chara vulgaris (Common stonewort).